Consider the following 137-residue polypeptide: Acidic phospholipase A2 PL-II (137 aa).

Positions 1-17 (AVCVSLLGASSIRPLPL) are cleaved as a signal peptide. 7 disulfides stabilise this stretch: Cys28–Cys89, Cys44–Cys136, Cys46–Cys62, Cys61–Cys117, Cys68–Cys110, Cys78–Cys103, and Cys96–Cys108. Residues Tyr45, Gly47, and Gly49 each coordinate Ca(2+). The active site involves His65. Residue Asp66 participates in Ca(2+) binding. Residue Asp111 is part of the active site.

The cofactor is Ca(2+). In terms of tissue distribution, expressed by the venom gland.

The protein localises to the secreted. The enzyme catalyses a 1,2-diacyl-sn-glycero-3-phosphocholine + H2O = a 1-acyl-sn-glycero-3-phosphocholine + a fatty acid + H(+). Its function is as follows. Snake venom phospholipase A2 (PLA2) that may act in the hemostasis system of the prey. Exhibits hydrolytic activities, and prefers the anionic micelles (dPPC with deoxycholate) (54 umol/mg/min) to the zwitterionic micelles (dPPC with Triton X-100) (15 umol/mg/min). PLA2 catalyzes the calcium-dependent hydrolysis of the 2-acyl groups in 3-sn-phosphoglycerides. This is Acidic phospholipase A2 PL-II from Walterinnesia aegyptia (Desert black snake).